A 292-amino-acid chain; its full sequence is Protease HtpX homolog (292 aa).

2 consecutive transmembrane segments (helical) span residues 9 to 29 (TGVL…VLGN) and 31 to 51 (TGMM…YWYS). A Zn(2+)-binding site is contributed by H133. E134 is an active-site residue. H137 lines the Zn(2+) pocket. The next 2 membrane-spanning stretches (helical) occupy residues 148 to 168 (LAAV…WMLW) and 185 to 205 (LGAI…QMAI). E210 serves as a coordination point for Zn(2+).

It belongs to the peptidase M48B family. Zn(2+) serves as cofactor.

It is found in the cell membrane. This chain is Protease HtpX homolog, found in Thermococcus sibiricus (strain DSM 12597 / MM 739).